Here is a 172-residue protein sequence, read N- to C-terminus: Large ribosomal subunit protein uL10 (172 aa).

The protein belongs to the universal ribosomal protein uL10 family. In terms of assembly, part of the ribosomal stalk of the 50S ribosomal subunit. The N-terminus interacts with L11 and the large rRNA to form the base of the stalk. The C-terminus forms an elongated spine to which L12 dimers bind in a sequential fashion forming a multimeric L10(L12)X complex.

Its function is as follows. Forms part of the ribosomal stalk, playing a central role in the interaction of the ribosome with GTP-bound translation factors. This Liberibacter africanus subsp. capensis protein is Large ribosomal subunit protein uL10 (rplJ).